The following is a 118-amino-acid chain: Cell division protein SepF (118 aa).

The segment at 1-12 (MGIMSKILGGGG) is important for localization in a ring-like structure at midcell.

In terms of assembly, homodimer. Does not oligomerize. Interacts with FtsZ2.

The protein localises to the cytoplasm. Involved in cell division. Probably acts as a membrane anchor for FstZ2, tethering its filaments to the division site. May be involved in septum closure. The protein is Cell division protein SepF of Haloferax volcanii (strain ATCC 29605 / DSM 3757 / JCM 8879 / NBRC 14742 / NCIMB 2012 / VKM B-1768 / DS2) (Halobacterium volcanii).